The following is a 578-amino-acid chain: Vi polysaccharide biosynthesis protein VipC/TviE (578 aa).

Its pathway is glycan metabolism; Vi-antigen biosynthesis. It functions in the pathway capsule biogenesis; capsule polysaccharide biosynthesis. This is Vi polysaccharide biosynthesis protein VipC/TviE (vipC) from Salmonella typhi.